The following is a 432-amino-acid chain: Adenylosuccinate synthetase (432 aa).

GTP-binding positions include 13–19 and 41–43; these read GDEGKGK and GHT. Asp14 functions as the Proton acceptor in the catalytic mechanism. Asp14 and Gly41 together coordinate Mg(2+). Residues 14–17, 39–42, Thr130, Arg144, Gln225, Thr240, and Arg304 contribute to the IMP site; these read DEGK and NAGH. His42 acts as the Proton donor in catalysis. Position 300 to 306 (300 to 306) interacts with substrate; it reads STTGRPR. GTP contacts are provided by residues Arg306, 332-334, and 416-418; these read KLD and STG.

It belongs to the adenylosuccinate synthetase family. As to quaternary structure, homodimer. It depends on Mg(2+) as a cofactor.

It localises to the cytoplasm. The enzyme catalyses IMP + L-aspartate + GTP = N(6)-(1,2-dicarboxyethyl)-AMP + GDP + phosphate + 2 H(+). The protein operates within purine metabolism; AMP biosynthesis via de novo pathway; AMP from IMP: step 1/2. Its function is as follows. Plays an important role in the de novo pathway of purine nucleotide biosynthesis. Catalyzes the first committed step in the biosynthesis of AMP from IMP. The chain is Adenylosuccinate synthetase from Nitrosomonas eutropha (strain DSM 101675 / C91 / Nm57).